A 1077-amino-acid chain; its full sequence is TSC22 domain family protein 1 (1077 aa).

The segment at 1–98 (MHQPPESTAA…SQAQLQGQPL (98 aa)) is required for interaction with TGFBR1 and promotion of TGF-beta signaling. 5 disordered regions span residues 22–112 (MAHP…SGFQ), 125–283 (ISSN…VPSS), 458–492 (QTPTEASSSERESTSGSSVSSSVSTLSHYTESVGS), 842–874 (SSAAPSGMPSVPTNLVPPQNIAQPPATQNGSLV), and 909–947 (QAIGSQMEDARRPAEPSLGGLPQTMSGDSGGMSAVSDGS). Over residues 58–70 (FPPPSLLQPPPPA) the composition is skewed to pro residues. A compositionally biased stretch (low complexity) spans 84–96 (SLNLLSQAQLQGQ). Acidic residues predominate over residues 133–142 (EDTESYDDLD). The span at 216–240 (HPHHLHHHHHPHHGHHLHHGHHHSS) shows a compositional bias: basic residues. Ser-263 carries the phosphoserine modification. Low complexity predominate over residues 471 to 489 (TSGSSVSSSVSTLSHYTES). A compositionally biased stretch (polar residues) spans 852–874 (VPTNLVPPQNIAQPPATQNGSLV). The span at 933-947 (MSGDSGGMSAVSDGS) shows a compositional bias: low complexity. The segment at 1010 to 1031 (LKEQIKELIEKNSQLEQENNLL) is leucine-zipper. The segment at 1042 to 1077 (QFQAQLQTGSPPATTQPQGTTQPPAQPASQGSGSTA) is disordered. The segment covering 1048–1077 (QTGSPPATTQPQGTTQPPAQPASQGSGSTA) has biased composition (low complexity).

This sequence belongs to the TSC-22/Dip/Bun family. As to quaternary structure, forms homodimers. Forms heterodimers. Component of a complex composed of TSC22D1 (via N-terminus), TGFBR1 and TGFBR2; the interaction between TSC22D1 and TGFBR1 is inhibited by SMAD7 and promoted by TGFB1. Interacts with SMAD7; the interaction requires TGF-beta and the interaction is inhibited by TGFBR1. Interacts with TPT1/fortilin; interaction results in the destabilization of TSC22D1 protein and prevents TSC22D1-mediated apoptosis. Interacts with SMAD4 (via N-terminus). Interacts with ACVRL1/ALK1, ACVR1/ALK2, BMPR1A/ALK3, ACVR1B/ALK4, BMPR1B/ALK6, ACVR2A/ACTRII, and BMPR2. Interacts with SMAD6. Interacts with TFE3; the interaction is enhanced in the presence of TGF-beta. Forms a heterodimer with TSC22D4/THG1. In terms of assembly, forms a heterodimer with TSC22D4/THG1. Interacts with histone H1-2. Interacts with GNL3. As to expression, expressed in bone marrow cells (at protein level). Expressed in T-cells. Expressed in the brain. In terms of tissue distribution, expressed in the myoepithelial cells of the mammary gland ducts and alveoli, expression is consistent throughout pregnancy, lactation and involution (at protein level). Expressed in the cortex, medulla and papilla of the kidney. Expressed in the myoepithelial cells of the mammary gland, expression significantly increases in the secretory luminal epithelium of the mammary gland at the initiation of involution, with levels decreasing from day 3 of involution onwards (at protein level). Expressed in the cortex, medulla and papilla of the kidney.

The protein resides in the cytoplasm. Its subcellular location is the nucleus. It is found in the cell membrane. It localises to the mitochondrion. Functionally, transcriptional repressor. Acts on the C-type natriuretic peptide (CNP) promoter. Acts to promote CASP3-mediated apoptosis. Positively regulates TGF-beta signaling by interacting with SMAD7 which inhibits binding of SMAD7 to TGFBR1, preventing recruitment of SMURF ubiquitin ligases to TGFBR1 and inhibiting SMURF-mediated ubiquitination and degradation of TGFBR1. Contributes to enhancement of TGF-beta signaling by binding to and modulating the transcription activator activity of SMAD4. Promotes TGF-beta-induced transcription of COL1A2; via its interaction with TFE3 at E-boxes in the gene proximal promoter. Plays a role in the repression of hematopoietic precursor cell growth. Promotes IL2 deprivation-induced apoptosis in T-lymphocytes, via repression of TSC22D3/GILZ transcription and activation of the caspase cascade. In terms of biological role, may act to negatively regulate TGFB3 signaling and thereby inhibit cell death in mammary gland cells. Its function is as follows. Positively regulates cell death in response to TGFB3 during mammary gland involution. This Mus musculus (Mouse) protein is TSC22 domain family protein 1.